The chain runs to 142 residues: Large ribosomal subunit protein uL23 (142 aa).

Belongs to the universal ribosomal protein uL23 family.

This protein binds to a specific region on the 26S rRNA. This is Large ribosomal subunit protein uL23 (RPL25) from Cyberlindnera jadinii (Torula yeast).